The sequence spans 245 residues: Small ribosomal subunit protein uS2 (245 aa).

The protein belongs to the universal ribosomal protein uS2 family.

This is Small ribosomal subunit protein uS2 from Pseudomonas entomophila (strain L48).